Here is a 126-residue protein sequence, read N- to C-terminus: SH2 domain-containing protein 1A (126 aa).

One can recognise an SH2 domain in the interval 6–104 (VYHGKISRET…VTPLQYPVEK (99 aa)). The interval 67-92 (ETAPGVHKRFFRKVKNLISAFQKPDQ) is interaction with FYN SH3 domain. Position 89 is an N6-acetyllysine (Lys-89). Residues 100 to 126 (YPVEKSSGRGPQAPTGRRDSDICLNAP) form a disordered region.

As to quaternary structure, interacts with CD84, CD244, LY9, SLAMF1 and FYN. Interacts with NTRK1, NTRK2 and NTRK3. As to expression, T-cells.

It localises to the cytoplasm. Functionally, cytoplasmic adapter regulating receptors of the signaling lymphocytic activation molecule (SLAM) family such as SLAMF1, CD244, LY9, CD84, SLAMF6 and SLAMF7. In SLAM signaling seems to cooperate with SH2D1B/EAT-2. Initially it has been proposed that association with SLAMF1 prevents SLAMF1 binding to inhibitory effectors including INPP5D/SHIP1 and PTPN11/SHP-2. However, by simultaneous interactions, recruits FYN which subsequently phosphorylates and activates SLAMF1. Positively regulates CD244/2B4- and CD84-mediated natural killer (NK) cell functions. Can also promote CD48-, SLAMF6 -, LY9-, and SLAMF7-mediated NK cell activation. In the context of NK cell-mediated cytotoxicity enhances conjugate formation with target cells. May also regulate the activity of the neurotrophin receptors NTRK1, NTRK2 and NTRK3. The polypeptide is SH2 domain-containing protein 1A (Sh2d1a) (Mus musculus (Mouse)).